Reading from the N-terminus, the 294-residue chain is Protoheme IX farnesyltransferase (294 aa).

8 helical membrane passes run 19–39, 41–61, 89–109, 111–131, 138–158, 166–186, 218–238, and 272–292; these read PKQT…AGGM, LDAL…TTSV, VEAL…SYLI, PWTA…YTMW, LSII…WAAA, AIMI…YISI, VLMI…PIFL, and SPVE…RILW.

It belongs to the UbiA prenyltransferase family. Protoheme IX farnesyltransferase subfamily.

The protein resides in the cell membrane. The enzyme catalyses heme b + (2E,6E)-farnesyl diphosphate + H2O = Fe(II)-heme o + diphosphate. It participates in porphyrin-containing compound metabolism; heme O biosynthesis; heme O from protoheme: step 1/1. Its function is as follows. Converts heme B (protoheme IX) to heme O by substitution of the vinyl group on carbon 2 of heme B porphyrin ring with a hydroxyethyl farnesyl side group. The protein is Protoheme IX farnesyltransferase of Korarchaeum cryptofilum (strain OPF8).